A 325-amino-acid polypeptide reads, in one-letter code: Olfactory receptor 1S2 (325 aa).

The Extracellular segment spans residues 1 to 38 (MKTLCSFLQISRNMHQENQTTITEFILLGLSNQAEHQN). N-linked (GlcNAc...) asparagine glycosylation is present at N18. A helical transmembrane segment spans residues 39 to 62 (LLFVLFLSMYVVTVVGNGLIIVAI). Residues 63 to 70 (SLDIYLHT) lie on the Cytoplasmic side of the membrane. Residues 71–92 (PMYLFLAYLSFADISSISNSVP) form a helical membrane-spanning segment. Residues 93 to 113 (KMLVNIQTNSQSISYESCITQ) are Extracellular-facing. C110 and C202 are oxidised to a cystine. Residues 114-133 (MYFSIVFVVTDNLLLGTMAF) form a helical membrane-spanning segment. Over 134 to 152 (DHFVAICHPLNYTTFMRAR) the chain is Cytoplasmic. The chain crosses the membrane as a helical span at residues 153-171 (FGTLLTVISWFLSNIIALT). Topologically, residues 172–208 (HTLLLIQLLFCDHNTLPHFFCDLAPLLKLSCSDTMIN) are extracellular. A helical membrane pass occupies residues 209–232 (ELVLFIVGLSVIIFPFVLIFFSYV). The Cytoplasmic portion of the chain corresponds to 233 to 249 (CIIRAVLGVSSTQGKWK). Residues 250–272 (AFSTCGSHLTIALLFYGTTVGVY) traverse the membrane as a helical segment. Residues 273–285 (FFPSSTHPEDTDK) lie on the Extracellular side of the membrane. Residues 286-305 (IGAVLFTVVTPMMNPFIYSL) traverse the membrane as a helical segment. Topologically, residues 306 to 325 (RNKDMKGALRKLINRKISSL) are cytoplasmic.

Belongs to the G-protein coupled receptor 1 family.

It localises to the cell membrane. In terms of biological role, odorant receptor. This chain is Olfactory receptor 1S2 (OR1S2), found in Homo sapiens (Human).